Here is a 75-residue protein sequence, read N- to C-terminus: Acylphosphatase-like protein MJ1405 (75 aa).

Residues 8 to 75 (TYEIIIYGRI…TNFWRVRKCK (68 aa)) form the Acylphosphatase-like domain.

The protein is Acylphosphatase-like protein MJ1405 of Methanocaldococcus jannaschii (strain ATCC 43067 / DSM 2661 / JAL-1 / JCM 10045 / NBRC 100440) (Methanococcus jannaschii).